A 675-amino-acid chain; its full sequence is DNA ligase (675 aa).

NAD(+)-binding positions include 35 to 39, 84 to 85, and Glu115; these read DSEYD and SL. The active-site N6-AMP-lysine intermediate is Lys117. 4 residues coordinate NAD(+): Arg138, Glu175, Lys292, and Lys316. Zn(2+) is bound by residues Cys410, Cys413, Cys428, and Cys434. The region spanning 593–675 is the BRCT domain; the sequence is QIVQPLLGRT…RNFLDDTSFP (83 aa).

It belongs to the NAD-dependent DNA ligase family. LigA subfamily. It depends on Mg(2+) as a cofactor. Mn(2+) serves as cofactor.

It carries out the reaction NAD(+) + (deoxyribonucleotide)n-3'-hydroxyl + 5'-phospho-(deoxyribonucleotide)m = (deoxyribonucleotide)n+m + AMP + beta-nicotinamide D-nucleotide.. In terms of biological role, DNA ligase that catalyzes the formation of phosphodiester linkages between 5'-phosphoryl and 3'-hydroxyl groups in double-stranded DNA using NAD as a coenzyme and as the energy source for the reaction. It is essential for DNA replication and repair of damaged DNA. The sequence is that of DNA ligase from Nitrosococcus oceani (strain ATCC 19707 / BCRC 17464 / JCM 30415 / NCIMB 11848 / C-107).